Here is a 132-residue protein sequence, read N- to C-terminus: MKFRIGELADKCGVNKETIRYYERLGLIPEPERTEKGYRMYSQQTVDRLHFIKRMQELGFTLNEIDKLLGVVDRDEAKCRDMYDFTILKIEDIQRKIEDLKRIERMLMDLKERCPENKDIYECPIIETLMKK.

The HTH merR-type domain maps to 2 to 71 (KFRIGELADK…LNEIDKLLGV (70 aa)). The H-T-H motif DNA-binding region spans 5–24 (IGELADKCGVNKETIRYYER). Cysteine 79, cysteine 114, and cysteine 123 together coordinate Hg(2+).

Homodimer.

Its function is as follows. Mediates the mercuric-dependent induction of mercury resistance operon. In the absence of mercury MerR represses transcription by binding tightly to the mer operator region; when mercury is present the dimeric complex binds a single ion and becomes a potent transcriptional activator, while remaining bound to the mer site. This Bacillus cereus protein is Mercuric resistance operon regulatory protein (merR1).